A 131-amino-acid chain; its full sequence is Sec-independent protein translocase protein TatB (131 aa).

Residues 2 to 22 (FDGIGFMELLLIGIVGLVVLG) traverse the membrane as a helical segment. Over residues 86 to 95 (LKEAAQSVNR) the composition is skewed to polar residues. A disordered region spans residues 86–131 (LKEAAQSVNRPYQVEDVPAAKDVPAKEMPTSETSTATNANSDKPNG). The segment covering 115 to 131 (TSETSTATNANSDKPNG) has biased composition (low complexity).

This sequence belongs to the TatB family. The Tat system comprises two distinct complexes: a TatABC complex, containing multiple copies of TatA, TatB and TatC subunits, and a separate TatA complex, containing only TatA subunits. Substrates initially bind to the TatABC complex, which probably triggers association of the separate TatA complex to form the active translocon.

The protein resides in the cell inner membrane. Functionally, part of the twin-arginine translocation (Tat) system that transports large folded proteins containing a characteristic twin-arginine motif in their signal peptide across membranes. Together with TatC, TatB is part of a receptor directly interacting with Tat signal peptides. TatB may form an oligomeric binding site that transiently accommodates folded Tat precursor proteins before their translocation. In Shewanella halifaxensis (strain HAW-EB4), this protein is Sec-independent protein translocase protein TatB.